The primary structure comprises 363 residues: Protein RecA (363 aa).

79-86 (GPESSGKT) contributes to the ATP binding site.

This sequence belongs to the RecA family.

It is found in the cytoplasm. Can catalyze the hydrolysis of ATP in the presence of single-stranded DNA, the ATP-dependent uptake of single-stranded DNA by duplex DNA, and the ATP-dependent hybridization of homologous single-stranded DNAs. It interacts with LexA causing its activation and leading to its autocatalytic cleavage. The sequence is that of Protein RecA from Borrelia duttonii (strain Ly).